The sequence spans 258 residues: Imidazole glycerol phosphate synthase subunit HisF (258 aa).

Catalysis depends on residues aspartate 12 and aspartate 131.

The protein belongs to the HisA/HisF family. As to quaternary structure, heterodimer of HisH and HisF.

Its subcellular location is the cytoplasm. It carries out the reaction 5-[(5-phospho-1-deoxy-D-ribulos-1-ylimino)methylamino]-1-(5-phospho-beta-D-ribosyl)imidazole-4-carboxamide + L-glutamine = D-erythro-1-(imidazol-4-yl)glycerol 3-phosphate + 5-amino-1-(5-phospho-beta-D-ribosyl)imidazole-4-carboxamide + L-glutamate + H(+). The protein operates within amino-acid biosynthesis; L-histidine biosynthesis; L-histidine from 5-phospho-alpha-D-ribose 1-diphosphate: step 5/9. IGPS catalyzes the conversion of PRFAR and glutamine to IGP, AICAR and glutamate. The HisF subunit catalyzes the cyclization activity that produces IGP and AICAR from PRFAR using the ammonia provided by the HisH subunit. This chain is Imidazole glycerol phosphate synthase subunit HisF, found in Nitrosomonas eutropha (strain DSM 101675 / C91 / Nm57).